A 444-amino-acid polypeptide reads, in one-letter code: Tryptophan 5-hydroxylase 1 (444 aa).

The ACT domain occupies 19–94 (TLIFSLKNEV…TVLSVDSPDQ (76 aa)). Phosphoserine; by PKA is present on Ser58. Positions 235, 257, and 265 each coordinate L-tryptophan. Fe cation is bound by residues His272, His277, and Glu317. Ser336 and Ile366 together coordinate L-tryptophan.

It belongs to the biopterin-dependent aromatic amino acid hydroxylase family. Homotetramer. Interacts with DNAJC12. Fe(2+) is required as a cofactor. Ubiquitinated, leading to its degradation by the proteasome. Ubiquitinated is triggered by phosphorylation. Post-translationally, phosphorylated; triggering degradation by the proteasome.

It catalyses the reaction (6R)-L-erythro-5,6,7,8-tetrahydrobiopterin + L-tryptophan + O2 = 5-hydroxy-L-tryptophan + (4aS,6R)-4a-hydroxy-L-erythro-5,6,7,8-tetrahydrobiopterin. It participates in aromatic compound metabolism; serotonin biosynthesis; serotonin from L-tryptophan: step 1/2. Functionally, oxidizes L-tryptophan to 5-hydroxy-l-tryptophan in the rate-determining step of serotonin biosynthesis. The chain is Tryptophan 5-hydroxylase 1 (Tph1) from Rattus norvegicus (Rat).